Consider the following 416-residue polypeptide: MDKLVIKGGVPLEGTIRVSGSKNASLPILMASILLDEPVIYRNVPRLRDIHTTNKLLGILGCPAEFQGDAVHVRPCDLNPEAPYELVKTMRASVLCLGPLLARLGEARVAYPGGCAIGARPVDLHLSALEKMGAEFELDSGYIVGRCRQLQGAHIRFDFPTVGGTENLLMAATLAKGETILENAAREPEVIDLADFLCACGADITGQGTDVIRIRGVERLHGCEYRIMPDRIEAGTFMVAAGITRGNLLIEDCPDDALDAVSQKLRDMGLHVSREEGGTRVRYQGHLESTDIVTHPYPGFPTDMQAQFMALMCVADGFGMVEETIFENRFMHVLELVRMGADVRLVGRTARVRGGRQLRGAPVMASDLRASASLVLAGLAAQGETHVQRIYHLDRGYESIEEKLCPVGADIRRVPE.

22–23 (KN) contributes to the phosphoenolpyruvate binding site. R91 contacts UDP-N-acetyl-alpha-D-glucosamine. C115 acts as the Proton donor in catalysis. Residue C115 is modified to 2-(S-cysteinyl)pyruvic acid O-phosphothioketal. Residues 120 to 124 (RPVDL), D303, and I325 each bind UDP-N-acetyl-alpha-D-glucosamine.

Belongs to the EPSP synthase family. MurA subfamily.

The protein resides in the cytoplasm. It catalyses the reaction phosphoenolpyruvate + UDP-N-acetyl-alpha-D-glucosamine = UDP-N-acetyl-3-O-(1-carboxyvinyl)-alpha-D-glucosamine + phosphate. The protein operates within cell wall biogenesis; peptidoglycan biosynthesis. In terms of biological role, cell wall formation. Adds enolpyruvyl to UDP-N-acetylglucosamine. This is UDP-N-acetylglucosamine 1-carboxyvinyltransferase from Oleidesulfovibrio alaskensis (strain ATCC BAA-1058 / DSM 17464 / G20) (Desulfovibrio alaskensis).